A 507-amino-acid polypeptide reads, in one-letter code: Efflux pump ustT (507 aa).

11 helical membrane passes run 59–79, 146–166, 180–200, 216–236, 240–260, 316–336, 359–379, 398–418, 421–441, 449–469, and 481–501; these read IAVVASLTFLITDIAGQIIVA, LLIAMVGCLLSDIWVGVVTWF, IWQLIGGGGASISSMAFAMIA, HAAVLVAELVSVPAGAALANF, IPVFGAAIFMVLGILFAYVVV, VLLIMASFFVCQLGRMISGIT, AGVNLFVLAAIIPALSYILVK, VCLIIGSFVMFLAASPGTLVF, TVFALGFAFSVTARSFLTGMV, VFTGVTTMLYGGLVIGSPMLA, and IWVGLPFLLAAVLFTLALGAI.

Belongs to the major facilitator superfamily.

It is found in the cell membrane. It participates in mycotoxin biosynthesis. Efflux pump; part of the gene cluster that mediates the biosynthesis of the secondary metabolite ustiloxin B, an antimitotic tetrapeptide. Probably involved in self-resistance through the export of ustiloxin B. In Aspergillus flavus (strain ATCC 200026 / FGSC A1120 / IAM 13836 / NRRL 3357 / JCM 12722 / SRRC 167), this protein is Efflux pump ustT.